The sequence spans 107 residues: Apolipoprotein E (107 aa).

Tandem repeats lie at residues 11-32 (ALMD…EQLS), 33-54 (PVAE…ARLG), 55-76 (ADME…AMLG), 77-98 (QSTD…KRLL), and 99-107 (RDVDDLQKR). A 5 X 22 AA approximate tandem repeats region spans residues 11–107 (ALMDETMKEL…LRDVDDLQKR (97 aa)). Position 74 is a methionine sulfoxide (methionine 74). Phosphoserine is present on serine 78. Positions 89–99 (HLRKLRKRLLR) are LDL and other lipoprotein receptors binding. 93–96 (LRKR) provides a ligand contact to heparin.

It belongs to the apolipoprotein A1/A4/E family. In terms of assembly, homotetramer. May interact with ABCA1; functionally associated with ABCA1 in the biogenesis of HDLs. May interact with APP/A4 amyloid-beta peptide; the interaction is extremely stable in vitro but its physiological significance is unclear. May interact with MAPT. May interact with MAP2. In the cerebrospinal fluid, interacts with secreted SORL1. Interacts with PMEL; this allows the loading of PMEL luminal fragment on ILVs to induce fibril nucleation. APOE exists as multiple glycosylated and sialylated glycoforms within cells and in plasma. The extent of glycosylation and sialylation are tissue and context specific. In terms of processing, glycated in plasma VLDL. Post-translationally, phosphorylated by FAM20C in the extracellular medium.

It localises to the secreted. Its subcellular location is the extracellular space. The protein resides in the extracellular matrix. The protein localises to the extracellular vesicle. It is found in the endosome. It localises to the multivesicular body. In terms of biological role, APOE is an apolipoprotein, a protein associating with lipid particles, that mainly functions in lipoprotein-mediated lipid transport between organs via the plasma and interstitial fluids. APOE is a core component of plasma lipoproteins and is involved in their production, conversion and clearance. Apolipoproteins are amphipathic molecules that interact both with lipids of the lipoprotein particle core and the aqueous environment of the plasma. As such, APOE associates with chylomicrons, chylomicron remnants, very low density lipoproteins (VLDL) and intermediate density lipoproteins (IDL) but shows a preferential binding to high-density lipoproteins (HDL). It also binds a wide range of cellular receptors including the LDL receptor/LDLR, the LDL receptor-related proteins LRP1, LRP2 and LRP8 and the very low-density lipoprotein receptor/VLDLR that mediate the cellular uptake of the APOE-containing lipoprotein particles. Finally, APOE also has a heparin-binding activity and binds heparan-sulfate proteoglycans on the surface of cells, a property that supports the capture and the receptor-mediated uptake of APOE-containing lipoproteins by cells. A main function of APOE is to mediate lipoprotein clearance through the uptake of chylomicrons, VLDLs, and HDLs by hepatocytes. APOE is also involved in the biosynthesis by the liver of VLDLs as well as their uptake by peripheral tissues ensuring the delivery of triglycerides and energy storage in muscle, heart and adipose tissues. By participating in the lipoprotein-mediated distribution of lipids among tissues, APOE plays a critical role in plasma and tissues lipid homeostasis. APOE is also involved in two steps of reverse cholesterol transport, the HDLs-mediated transport of cholesterol from peripheral tissues to the liver, and thereby plays an important role in cholesterol homeostasis. First, it is functionally associated with ABCA1 in the biogenesis of HDLs in tissues. Second, it is enriched in circulating HDLs and mediates their uptake by hepatocytes. APOE also plays an important role in lipid transport in the central nervous system, regulating neuron survival and sprouting. This is Apolipoprotein E (APOE) from Saimiri sciureus (Common squirrel monkey).